The chain runs to 324 residues: IDS-like terpene synthase 1 (324 aa).

Mg(2+)-binding residues include Asp-77 and Asp-81.

This sequence belongs to the FPP/GGPP synthase family. Mg(2+) is required as a cofactor.

It catalyses the reaction (2E)-geranyl diphosphate = (E)-beta-ocimene + diphosphate. It carries out the reaction (2E)-geranyl diphosphate + H2O = linalool + diphosphate. The enzyme catalyses (2E,6E)-farnesyl diphosphate = (3E,6E)-alpha-farnesene + diphosphate. The catalysed reaction is (2E,6E,10E)-geranylgeranyl diphosphate = (E,E,E)-alpha-springene + diphosphate. Functionally, terpene synthase that shows monoterpene synthase activity and produces (E)-beta-ocimene as a major product and linalool as a minor product, using geranyl diphosphate (GPP) as substrate. Also shows sesquiterpene synthase activity as it is able to convert farnesyl diphosphate (FPP) into (E,E)-alpha-farnesene. Finally, TPS1 can convert geranylgeranyl diphosphate into (E,E,E)-alpha-springene. In Melampsora larici-populina (strain 98AG31 / pathotype 3-4-7) (Poplar leaf rust fungus), this protein is IDS-like terpene synthase 1.